Here is a 340-residue protein sequence, read N- to C-terminus: tRNA-specific 2-thiouridylase MnmA (340 aa).

ATP-binding positions include 6–13 (AMSGGVDS) and M32. Catalysis depends on C92, which acts as the Nucleophile. C92 and C186 are joined by a disulfide. G116 lines the ATP pocket. The tract at residues 134 to 136 (KDQ) is interaction with tRNA. C186 (cysteine persulfide intermediate) is an active-site residue. Residues 288–289 (RY) form an interaction with tRNA region.

Belongs to the MnmA/TRMU family.

The protein localises to the cytoplasm. The enzyme catalyses S-sulfanyl-L-cysteinyl-[protein] + uridine(34) in tRNA + AH2 + ATP = 2-thiouridine(34) in tRNA + L-cysteinyl-[protein] + A + AMP + diphosphate + H(+). Its function is as follows. Catalyzes the 2-thiolation of uridine at the wobble position (U34) of tRNA, leading to the formation of s(2)U34. The protein is tRNA-specific 2-thiouridylase MnmA of Campylobacter concisus (strain 13826).